Reading from the N-terminus, the 463-residue chain is Formate-nitrite transporter 2 (463 aa).

Residues 1–100 are Cytoplasmic-facing; the sequence is MCSIPPLRLL…VKKTQLRIDR (100 aa). Residues 101 to 121 traverse the membrane as a helical segment; it reads LLLQAFMAGIFVAMAGHCCTV. Residues 122–142 lie on the Extracellular side of the membrane; it reads LAGSYPTDPGDPLAVAKPTQK. A helical membrane pass occupies residues 143–163; the sequence is FIYGALFPVAFICIILTGAEL. At 164–189 the chain is on the cytoplasmic side; that stretch reads FTGNTMTMLICYFQKRVTMLQLGVNW. A helical transmembrane segment spans residues 190–210; the sequence is LGSLAGNWLGALFGAYFLSYL. At 211–237 the chain is on the extracellular side; it reads TGALGDEHVRQFLFRTCVNKISYGWGE. A helical transmembrane segment spans residues 238-258; that stretch reads CFLRGVGCNTFVCLAVWAVIA. The Cytoplasmic segment spans residues 259 to 265; it reads SENVAGK. A helical membrane pass occupies residues 266 to 286; that stretch reads VLVMWFPIVAFCVGGYEHIIA. Topologically, residues 287 to 305 are extracellular; it reads NMYTLQAGLMAGAPVAILD. A helical membrane pass occupies residues 306–326; that stretch reads VIAFNFLPTLLGNIVGGCLLV. The Cytoplasmic segment spans residues 327–463; the sequence is GAVYAYNFYP…QTAESVAQQV (137 aa). Positions 424–463 are disordered; sequence SGNLSTHARLDLPNRPVEPPSDGLEVTPQSQTAESVAQQV. Residues 450–463 are compositionally biased toward polar residues; the sequence is TPQSQTAESVAQQV.

This sequence belongs to the FNT transporter (TC 1.A.16) family. Homopentamer.

It localises to the cell membrane. The enzyme catalyses (S)-lactate(in) + H(+)(in) = (S)-lactate(out) + H(+)(out). The catalysed reaction is formate(in) + H(+)(in) = formate(out) + H(+)(out). It carries out the reaction pyruvate(out) + H(+)(out) = pyruvate(in) + H(+)(in). It catalyses the reaction acetate(out) + H(+)(out) = acetate(in) + H(+)(in). Its activity is regulated as follows. Inhibited by p-chloromercuribenzene sulfonate (pCMBS). Methyl methanethiosulfonate (MMTS) inhibits L-lactate but not formate transport. Inhibited by the Malaria Box compound MMV007839. Inhibited by BH-296, BH-317, BH-326 and BH-388 compounds. Functionally, monocarboxylate-proton symporter; active in acidic-to-neutral pH range. Transports L-lactate and formate. The chain is Formate-nitrite transporter 2 from Toxoplasma gondii (strain ATCC 50611 / Me49).